A 206-amino-acid polypeptide reads, in one-letter code: Small ribosomal subunit protein uS4c (206 aa).

An S4 RNA-binding domain is found at 93–161 (MRLDNIVYRL…IEKNIELLDK (69 aa)).

It belongs to the universal ribosomal protein uS4 family. As to quaternary structure, part of the 30S ribosomal subunit. Contacts protein S5. The interaction surface between S4 and S5 is involved in control of translational fidelity.

It localises to the plastid. Functionally, one of the primary rRNA binding proteins, it binds directly to 16S rRNA where it nucleates assembly of the body of the 30S subunit. Its function is as follows. With S5 and S12 plays an important role in translational accuracy. The protein is Small ribosomal subunit protein uS4c (rps4) of Euglena longa (Euglenophycean alga).